The sequence spans 336 residues: Retinol dehydrogenase 14 (336 aa).

Thr-5 is modified (phosphothreonine). 50–56 (GANSGLG) serves as a coordination point for NADP(+). A substrate-binding site is contributed by Ser-192. Tyr-217 acts as the Proton acceptor in catalysis.

It belongs to the short-chain dehydrogenases/reductases (SDR) family. Widely expressed.

It catalyses the reaction all-trans-retinol + NADP(+) = all-trans-retinal + NADPH + H(+). The catalysed reaction is 9-cis-retinol + NADP(+) = 9-cis-retinal + NADPH + H(+). It carries out the reaction 11-cis-retinol + NADP(+) = 11-cis-retinal + NADPH + H(+). Its pathway is cofactor metabolism; retinol metabolism. Functionally, retinol dehydrogenase with a clear preference for NADP. Displays high activity towards 9-cis, 11-cis and all-trans-retinol. Shows a very weak activity towards 13-cis-retinol. Has no activity towards steroid. This chain is Retinol dehydrogenase 14 (RDH14), found in Homo sapiens (Human).